A 377-amino-acid polypeptide reads, in one-letter code: MAMKRAIGLMSGTSLDGIDVALIESDGERIRLVKSANGLVAPLGPTGYRGYAEAERALLREATRDAEGLRARTDRPGRLAEAEDFVARAHAEAIEAFLAQNDLRPEDIDVVGFHGQTVIHRPKLGLTVQLGDGAALAKRLGIRVVSDMRANDVAQGGQGAPLVPVFHKALAEAAGFTGPLGILNIGGLANATLIDSGGNMLAFDTGPGNGPINDWMKERTGQDFDEGGATAARGTVDEDLLENLLGHPLILRAPPKSLDRNWFSHRLAGYLTVEDGAVTLTAFTAHAVARSLAFASERPARWIVGGGGAKNRTLMVMLERLLAAEVLNADAIGWSSDFLEAQAFAYLALRSLEGLPLTYPTTTGVAAPVTGGIVSEP.

An ATP-binding site is contributed by 12–19; it reads GTSLDGID.

It belongs to the anhydro-N-acetylmuramic acid kinase family.

The catalysed reaction is 1,6-anhydro-N-acetyl-beta-muramate + ATP + H2O = N-acetyl-D-muramate 6-phosphate + ADP + H(+). It participates in amino-sugar metabolism; 1,6-anhydro-N-acetylmuramate degradation. It functions in the pathway cell wall biogenesis; peptidoglycan recycling. Catalyzes the specific phosphorylation of 1,6-anhydro-N-acetylmuramic acid (anhMurNAc) with the simultaneous cleavage of the 1,6-anhydro ring, generating MurNAc-6-P. Is required for the utilization of anhMurNAc either imported from the medium or derived from its own cell wall murein, and thus plays a role in cell wall recycling. This is Anhydro-N-acetylmuramic acid kinase from Methylorubrum extorquens (strain CM4 / NCIMB 13688) (Methylobacterium extorquens).